An 895-amino-acid chain; its full sequence is La RNA-binding domain-containing protein LHP1 (895 aa).

Disordered stretches follow at residues 24–265 (ANGN…PPPS), 285–344 (SATS…HDAT), 359–590 (GEDK…LGHG), 796–857 (PDAA…AQDV), and 870–895 (VNGEIKEKEEVKAMENEGEESENYEQ). Low complexity predominate over residues 31–75 (SSPSSSSSATPEPTSLSSSTSGKKAFSTATSKSGQQKQGSSPQPG). Positions 95 to 143 (QRTDRSEEKEKRGSSSKNWRERSHRDEKNQDDGEKRNGRERSKKEKGDK) are enriched in basic and acidic residues. Low complexity predominate over residues 152–170 (SATSSEKTAKSLSSSTKNA). Polar residues-rich tracts occupy residues 172-184 (GVTSSSQGENPIA) and 192-216 (KAQNDSTFRSSSAAAPVGPTTSTIN). A compositionally biased stretch (basic and acidic residues) spans 228-244 (DNWRARPAKVEKNEKTE). Residues 251 to 260 (QAQPQPQRQL) are compositionally biased toward low complexity. Residues 296–314 (KSDKEKSLTNGMVKEEDSG) show a composition bias toward basic and acidic residues. Positions 325–336 (AAAAAAAGTSST) are enriched in low complexity. Basic and acidic residues-rich tracts occupy residues 359–371 (GEDKKEKAKERLN), 405–428 (HAAEQSRRQNRMEAKKRSSGREGG), 452–468 (EGKKARKEGAQQKDGHA), and 485–495 (GDVKETKEGDA). Residues 496–508 (RSASQQESSSHRS) show a composition bias toward low complexity. Residues 510 to 521 (PSISASANTGID) show a composition bias toward polar residues. Residues 563–572 (RGSFGGGRAR) are compositionally biased toward gly residues. An HTH La-type RNA-binding domain is found at 706-796 (VPNLDPLRFY…GAESHRWVLP (91 aa)). A Phosphoserine modification is found at S847. Positions 873 to 884 (EIKEKEEVKAME) are enriched in basic and acidic residues. A compositionally biased stretch (acidic residues) spans 885–895 (NEGEESENYEQ).

Its function is as follows. May act as an RNA-binding protein. The polypeptide is La RNA-binding domain-containing protein LHP1 (Cryptococcus neoformans var. grubii serotype A (strain H99 / ATCC 208821 / CBS 10515 / FGSC 9487) (Filobasidiella neoformans var. grubii)).